A 306-amino-acid chain; its full sequence is MNQLVVAFPFWHWLVEPLQYEFLIRAIWVSAFVGLVCAVLSCYITLKGWSLMGDAISHAVVPGVVLAYALNIPFAIGAFTFGFGATVAIGYVKSKTRLKEDAVIGIVFTGFFALGLVLVTKIPSNVDLFHILFGNVLGISQQDIIQTLIAGSITLIVILLRRKDLLLFCFDPNHAKAIGLRTQVMYYTLLSVLALTIVAALQTAGIILVISMLVTPGSIGYLLSDRFDHMLWYSVVSSVLSCVLGTYLSYHFDVSTGGMIVVILTTLFVIAMIGAPKYGILAQEWRKRSGPNPEDDENQTVVVDQV.

Residues 1–25 (MNQLVVAFPFWHWLVEPLQYEFLIR) lie on the Periplasmic side of the membrane. The chain crosses the membrane as a helical span at residues 26–46 (AIWVSAFVGLVCAVLSCYITL). Over 47–48 (KG) the chain is Cytoplasmic. Residues 49–69 (WSLMGDAISHAVVPGVVLAYA) traverse the membrane as a helical segment. At 70-71 (LN) the chain is on the periplasmic side. The chain crosses the membrane as a helical span at residues 72-92 (IPFAIGAFTFGFGATVAIGYV). Topologically, residues 93–101 (KSKTRLKED) are cytoplasmic. Residues 102–122 (AVIGIVFTGFFALGLVLVTKI) traverse the membrane as a helical segment. Residues 123–141 (PSNVDLFHILFGNVLGISQ) lie on the Periplasmic side of the membrane. Residues 142 to 162 (QDIIQTLIAGSITLIVILLRR) traverse the membrane as a helical segment. The Cytoplasmic portion of the chain corresponds to 163 to 179 (KDLLLFCFDPNHAKAIG). A helical transmembrane segment spans residues 180–200 (LRTQVMYYTLLSVLALTIVAA). The Periplasmic portion of the chain corresponds to 201-202 (LQ). A helical transmembrane segment spans residues 203-223 (TAGIILVISMLVTPGSIGYLL). Over 224–228 (SDRFD) the chain is Cytoplasmic. The chain crosses the membrane as a helical span at residues 229–249 (HMLWYSVVSSVLSCVLGTYLS). Over 250–255 (YHFDVS) the chain is Periplasmic. The chain crosses the membrane as a helical span at residues 256–276 (TGGMIVVILTTLFVIAMIGAP). At 277 to 306 (KYGILAQEWRKRSGPNPEDDENQTVVVDQV) the chain is on the cytoplasmic side.

The protein belongs to the ABC-3 integral membrane protein family.

It is found in the cell membrane. Functionally, part of an ATP-driven transport system for manganese. In Synechocystis sp. (strain ATCC 27184 / PCC 6803 / Kazusa), this protein is Manganese transport system membrane protein MntB (mntB).